A 150-amino-acid polypeptide reads, in one-letter code: Large ribosomal subunit protein bL9 (150 aa).

Belongs to the bacterial ribosomal protein bL9 family.

In terms of biological role, binds to the 23S rRNA. This is Large ribosomal subunit protein bL9 from Corynebacterium diphtheriae (strain ATCC 700971 / NCTC 13129 / Biotype gravis).